A 380-amino-acid polypeptide reads, in one-letter code: Growth-regulating factor 4 (380 aa).

The segment at 1 to 21 is disordered; it reads MDLQLKQWRSQQQNESEEQGS. Residues 82–117 enclose the QLQ domain; sequence FFSWAQWQELELQALIYRYMLAGASVPQELLLPIKK. A WRC domain is found at 151 to 195; that stretch reads DPEPGRCKRTDGKKWRCSRDVVAGHKYCDRHIHRGRNRSRKPVET. 2 consecutive short sequence motifs (bipartite nuclear localization signal) follow at residues 156–166 and 184–191; these read RCKRTDGKKWR and RGRNRSRK. 2 disordered regions span residues 222–270 and 284–330; these read NNNH…GRSD and RSSD…NMRN. Low complexity-rich tracts occupy residues 228–245 and 285–296; these read SSGS…SCSS and SSDSTSSPMSSS. The span at 297-320 shows a compositional bias: polar residues; sequence TCHLSISMPGNNTSSDVSLKLSTG.

This sequence belongs to the GRF family. As to expression, strongly expressed in actively growing and developing tissues, such as roots, upper stems, and shoot tips containing the shoot apical meristem (SAM) and flower buds. Also expressed in mature flowers, but weakly expressed in mature stems and leaves.

It localises to the nucleus. Its function is as follows. Transcription activator that plays a role in the regulation of cell expansion in leaf and cotyledons tissues. Component of a network formed by miR396, the GRFs and their interacting factors (GIFs) acting in the regulation of meristem function, at least partially through the control of cell proliferation. The chain is Growth-regulating factor 4 (GRF4) from Arabidopsis thaliana (Mouse-ear cress).